A 365-amino-acid polypeptide reads, in one-letter code: Aminomethyltransferase (365 aa).

The protein belongs to the GcvT family. In terms of assembly, the glycine cleavage system is composed of four proteins: P, T, L and H.

The catalysed reaction is N(6)-[(R)-S(8)-aminomethyldihydrolipoyl]-L-lysyl-[protein] + (6S)-5,6,7,8-tetrahydrofolate = N(6)-[(R)-dihydrolipoyl]-L-lysyl-[protein] + (6R)-5,10-methylene-5,6,7,8-tetrahydrofolate + NH4(+). In terms of biological role, the glycine cleavage system catalyzes the degradation of glycine. The polypeptide is Aminomethyltransferase (Aeromonas salmonicida (strain A449)).